Here is a 342-residue protein sequence, read N- to C-terminus: tRNA N6-adenosine threonylcarbamoyltransferase (342 aa).

The Fe cation site is built by H111 and H115. Residues 134–138, D167, G180, and N272 contribute to the substrate site; that span reads LVSGG. D300 is a Fe cation binding site.

The protein belongs to the KAE1 / TsaD family. Requires Fe(2+) as cofactor.

The protein localises to the cytoplasm. It carries out the reaction L-threonylcarbamoyladenylate + adenosine(37) in tRNA = N(6)-L-threonylcarbamoyladenosine(37) in tRNA + AMP + H(+). In terms of biological role, required for the formation of a threonylcarbamoyl group on adenosine at position 37 (t(6)A37) in tRNAs that read codons beginning with adenine. Is involved in the transfer of the threonylcarbamoyl moiety of threonylcarbamoyl-AMP (TC-AMP) to the N6 group of A37, together with TsaE and TsaB. TsaD likely plays a direct catalytic role in this reaction. The sequence is that of tRNA N6-adenosine threonylcarbamoyltransferase from Aromatoleum aromaticum (strain DSM 19018 / LMG 30748 / EbN1) (Azoarcus sp. (strain EbN1)).